Here is a 150-residue protein sequence, read N- to C-terminus: MGQYKIWVDADACPNPIKEILFRAAERKSLPLVLVANQMLRVPPSPYISQVRVGSGFDVADQYIVDHVEATHLVITADIPLAAQVIEKGALALNPRGELYTTDNIRQKLTMRDFMEDLRSSGVHTGGPDALSAADKQAFANSLDKWLVRV.

It belongs to the UPF0178 family.

The chain is UPF0178 protein Shewmr4_1560 from Shewanella sp. (strain MR-4).